The sequence spans 471 residues: NALCN channel auxiliary factor 2 (471 aa).

Residues 47–67 (LASLLFFTVLLADHLWLCAGA) form a helical membrane-spanning segment. Residues 76-115 (SAMRPPWGAGRERQPVPPRAVLPPPPPSPGEPSASSGTCG) are disordered. Residues 90–105 (PVPPRAVLPPPPPSPG) are compositionally biased toward pro residues. N-linked (GlcNAc...) asparagine glycosylation is present at Asn120. Disordered regions lie at residues 158–178 (EPTT…APEF) and 399–424 (HYHP…GGSR). Over residues 161–171 (TPAPPLRPPDS) the composition is skewed to pro residues. Residues 432–452 (LCVLVLILLHTVVSFSSSQSG) traverse the membrane as a helical segment.

This sequence belongs to the NALF family.

It is found in the membrane. In terms of biological role, probable component of the NALCN channel complex, a channel that regulates the resting membrane potential and controls neuronal excitability. The sequence is that of NALCN channel auxiliary factor 2 (Nalf2) from Mus musculus (Mouse).